The primary structure comprises 90 residues: Protein P18 (90 aa).

The next 3 membrane-spanning stretches (helical) occupy residues Met-1–Leu-21, Gly-37–Ile-57, and Pro-60–Ile-80.

The protein localises to the virion membrane. Its function is as follows. Component of the phage injection machinery. Required for DNA injection in the membrane transformation event. Involved in the formation of the membrane tail tube to connect the virus interior with the host cytosol. Essential for viral infectivity. The protein is Protein P18 (XVIII) of Acinetobacter calcoaceticus (Arthrobacter siderocapsulatus).